The primary structure comprises 197 residues: Guanylate kinase (197 aa).

The 179-residue stretch at 7–185 (GLIIILSSPS…TLKKIHEIIV (179 aa)) folds into the Guanylate kinase-like domain. 14–21 (SPSGTGKS) is a binding site for ATP.

This sequence belongs to the guanylate kinase family.

Its subcellular location is the cytoplasm. It carries out the reaction GMP + ATP = GDP + ADP. Essential for recycling GMP and indirectly, cGMP. The protein is Guanylate kinase (gmk) of Rickettsia prowazekii (strain Madrid E).